We begin with the raw amino-acid sequence, 209 residues long: Imidazoleglycerol-phosphate dehydratase (209 aa).

The protein belongs to the imidazoleglycerol-phosphate dehydratase family.

It localises to the cytoplasm. It carries out the reaction D-erythro-1-(imidazol-4-yl)glycerol 3-phosphate = 3-(imidazol-4-yl)-2-oxopropyl phosphate + H2O. The protein operates within amino-acid biosynthesis; L-histidine biosynthesis; L-histidine from 5-phospho-alpha-D-ribose 1-diphosphate: step 6/9. The protein is Imidazoleglycerol-phosphate dehydratase of Prochlorococcus marinus (strain MIT 9313).